We begin with the raw amino-acid sequence, 510 residues long: Serine/threonine-protein kinase UL13 homolog (510 aa).

The segment at 1-63 (MDADDTPPNL…WANPSTATCM (63 aa)) is disordered. Residues 132 to 458 (RDRPRFAGRG…RRIFQCHAVR (327 aa)) form the Protein kinase domain. ATP is bound by residues 138-146 (AGRGTYGRV) and lysine 157. Catalysis depends on aspartate 257, which acts as the Proton acceptor.

This sequence belongs to the protein kinase superfamily. Ser/Thr protein kinase family. Autophosphorylated.

The protein resides in the virion tegument. Its subcellular location is the host nucleus. It catalyses the reaction L-seryl-[protein] + ATP = O-phospho-L-seryl-[protein] + ADP + H(+). The enzyme catalyses L-threonyl-[protein] + ATP = O-phospho-L-threonyl-[protein] + ADP + H(+). In terms of biological role, multifunctional serine/threonine kinase that plays a role in several processes including egress of virus particles from the nucleus, modulation of the actin cytoskeleton and regulation of viral and cellular gene expression. Regulates the nuclear localization of viral envelopment factor proteins 24 and 27, by phosphorylating the protein kinase ORF66, indicating a role in nuclear egress. Disrupts host nuclear lamins, including LMNA and LMNB1. Phosphorylates the viral Fc receptor composed of glycoproteins E (gE) and I (gI). Phosphorylation of glycoprotein E (gE) by UL13 alters its subcellular localization, from the host early endosome to the plasma membrane. Participates in the transcriptional regulation of cellular and viral mRNAs mainly by phosphorylating the viral transcriptional regulator IE63. The protein is Serine/threonine-protein kinase UL13 homolog of Varicella-zoster virus (strain Dumas) (HHV-3).